Reading from the N-terminus, the 405-residue chain is Envelope glycoprotein M (405 aa).

Residues 1–17 (MKSSKNDTFVYRTWFKT) lie on the Intravirion side of the membrane. A helical membrane pass occupies residues 18 to 38 (LVVYFVMFVMSAVVPITAMFP). Topologically, residues 39 to 76 (NLGYPCYFNALVDYGALNLTNYNLAHHLTPTLYLEPPE) are virion surface. A helical membrane pass occupies residues 77 to 97 (MFVYITLVFIADCVAFIYYAC). Over 98–121 (GEVALIKARKKVSGLTDLSAWVSA) the chain is Intravirion. Residues 122–142 (VGSPTVLFLAILKLWSIQVFI) form a helical membrane-spanning segment. Residues 143 to 149 (QVLSYKH) are Virion surface-facing. A helical membrane pass occupies residues 150–170 (VFLSAFVYFLHFLASVLHACA). The Intravirion segment spans residues 171–192 (CVTRFSPVWVVKAQDNSIPQDT). A helical transmembrane segment spans residues 193–215 (FLWWVVFYLKPIVTNLYLGCLAL). The Virion surface portion of the chain corresponds to 216–245 (ETLVFSLSVFLALGNSFYFMVGDMVLGAVN). A helical transmembrane segment spans residues 246–266 (LFLVLPIFWYILTEVWLASFL). Arg267 is a topological domain (intravirion). Residues 268–288 (HNFGFYCGMFIASIILILPLV) traverse the membrane as a helical segment. At 289-299 (RYEAVFVSAKL) the chain is on the virion surface side. A helical membrane pass occupies residues 300–320 (HTTVAINVAIIPILCSVAMLI). The Intravirion portion of the chain corresponds to 321-405 (RICRIFKSMR…TTDSEEEIFP (85 aa)). A disordered region spans residues 346–405 (LESEPRPRPSRTPSPGRNRRRSSTSSSSSRSTRRQRPVSTQALISSVLPMTTDSEEEIFP). Over residues 386–397 (QALISSVLPMTT) the composition is skewed to polar residues.

This sequence belongs to the herpesviridae glycoprotein M family. As to quaternary structure, interacts (via N-terminus) with gN (via N-terminus). The gM-gN heterodimer forms the gCII complex.

Its subcellular location is the virion membrane. The protein localises to the host Golgi apparatus. The protein resides in the host trans-Golgi network. It is found in the host endosome membrane. It localises to the host nucleus inner membrane. In terms of biological role, envelope glycoprotein important for virion assembly and egress. Plays a role in the correct incorporation of gH-gL into virion membrane. Directs the glycoprotein N (gN) to the host trans-Golgi network. This chain is Envelope glycoprotein M, found in Homo sapiens (Human).